We begin with the raw amino-acid sequence, 428 residues long: MNFDVVIIGGGLAGLTCGIALQTQGKQCVIINNGQAAIDFSSGSLDLLGQLPSGRQIQHFEQNYTALYQQAAQHPYALVGKDKVIEKARQFEQLAQTLNLGLVGTCDKNHFRVTPLGGLRPTWLSPNSVPIVTNEEMFPHRKIAVLGIEGYHDFQPQLLAENLVQHAQFAHCEVTTGYLNIPELDHLRHQSREFRSVNIAQLLEHKLAFSDLVREIREAVNGASAVFLPACFGLETQEFFSALKQATQLELFELPTLPPSLLGMRQHKQLTQHFKQLGGLMMNGDKVIAADVHHQRVTQVYTQLHQEIPIQAKDVVLASGSFFSKGLVAEFEKIREPIFALDLVENDRFNLQDRMTWTHSRFSAPQPYQQTGVVIDEHCRARKSGQFFENLYAIGNIVGGFNGIELGCGSGVAIVTALVAAEQIGGEK.

This sequence belongs to the anaerobic G-3-P dehydrogenase subunit B family. Composed of a catalytic GlpA/B dimer and of membrane bound GlpC. The cofactor is FMN.

It catalyses the reaction a quinone + sn-glycerol 3-phosphate = dihydroxyacetone phosphate + a quinol. It functions in the pathway polyol metabolism; glycerol degradation via glycerol kinase pathway; glycerone phosphate from sn-glycerol 3-phosphate (anaerobic route): step 1/1. Its function is as follows. Conversion of glycerol 3-phosphate to dihydroxyacetone. Uses fumarate or nitrate as electron acceptor. In Pasteurella multocida (strain Pm70), this protein is Anaerobic glycerol-3-phosphate dehydrogenase subunit B.